A 94-amino-acid polypeptide reads, in one-letter code: DASH complex subunit DAD5 (94 aa).

The segment covering 1–20 (MRRSTIVPTSRTSSSSPSPS) has biased composition (low complexity). Residues 1 to 25 (MRRSTIVPTSRTSSSSPSPSQMKSF) are disordered.

It belongs to the DASH complex HSK3 family. In terms of assembly, component of the DASH complex consisting of ask1, dad1, dad2, dad3, dad4, dam1, duo1, dad5, spc19 and spc34, with a stoichiometry of one copy of each subunit per complex. Multiple DASH complexes oligomerize to form a ring that encircles spindle microtubules and organizes the rod-like NDC80 complexes of the outer kinetochore. DASH complex oligomerization strengthens microtubule attachments. On cytoplasmic microtubules, DASH complexes appear to form patches instead of rings.

Its subcellular location is the nucleus. It is found in the cytoplasm. It localises to the cytoskeleton. The protein resides in the spindle. The protein localises to the chromosome. Its subcellular location is the centromere. It is found in the kinetochore. Component of the DASH complex that connects microtubules with kinetochores and couples microtubule depolymerisation to chromosome movement; it is involved in retrieving kinetochores to the spindle poles before their re-orientation on the spindle in early mitosis and allows microtubule depolymerization to pull chromosomes apart and resist detachment during anaphase. Kinetochores, consisting of a centromere-associated inner segment and a microtubule-contacting outer segment, play a crucial role in chromosome segregation by mediating the physical connection between centromeric DNA and microtubules. Kinetochores also serve as an input point for the spindle assembly checkpoint, which delays anaphase until all chromosomes have bioriented on the mitotic spindle. The DASH complex mediates bipolar kinetochore-microtubule attachments and facilitates the formation of additional interactions between outer kinetochore components and spindle microtubules. During chromosome movement along the microtubule, it is required both for the sliding of kinetochores along the lateral side of the microtubule and also for microtubule end-on pulling on the kinetochore. Modulates cytoplasmic microtubule dynamics by tracking the plus-end of shortening microtubules and slowing their depolymerization. The sequence is that of DASH complex subunit DAD5 from Schizosaccharomyces pombe (strain 972 / ATCC 24843) (Fission yeast).